The chain runs to 416 residues: Probable mannose-6-phosphate isomerase (416 aa).

Gln-99, His-101, Glu-126, and His-259 together coordinate Zn(2+). Arg-278 is a catalytic residue.

The protein belongs to the mannose-6-phosphate isomerase type 1 family. Requires Zn(2+) as cofactor.

The protein resides in the cytoplasm. The enzyme catalyses D-mannose 6-phosphate = D-fructose 6-phosphate. Its pathway is nucleotide-sugar biosynthesis; GDP-alpha-D-mannose biosynthesis; alpha-D-mannose 1-phosphate from D-fructose 6-phosphate: step 1/2. Involved in the synthesis of the GDP-mannose and dolichol-phosphate-mannose required for a number of critical mannosyl transfer reactions. The polypeptide is Probable mannose-6-phosphate isomerase (Caenorhabditis elegans).